The primary structure comprises 399 residues: Digeranylgeranylglycerophospholipid reductase (399 aa).

FAD is bound by residues Gly-15, Glu-34, Cys-45, Ala-46, Gly-48, Arg-99, Ala-123, Asp-280, Gly-292, and Ile-293.

This sequence belongs to the geranylgeranyl reductase family. DGGGPL reductase subfamily. It depends on FAD as a cofactor.

It carries out the reaction a 2,3-bis-O-phytanyl-sn-glycerol 1-phospholipid + 8 oxidized 2[4Fe-4S]-[ferredoxin] = a 2,3-bis-O-(geranylgeranyl)-sn-glycerol 1-phospholipid + 8 reduced 2[4Fe-4S]-[ferredoxin] + 16 H(+). The catalysed reaction is 2,3-bis-O-(phytanyl)-sn-glycerol 1-phosphate + 8 oxidized 2[4Fe-4S]-[ferredoxin] = 2,3-bis-O-(geranylgeranyl)-sn-glycerol 1-phosphate + 8 reduced 2[4Fe-4S]-[ferredoxin] + 16 H(+). It catalyses the reaction a 2,3-bis-O-phytanyl-sn-glycerol 1-phospholipid + 8 A = a 2,3-bis-O-(geranylgeranyl)-sn-glycerol 1-phospholipid + 8 AH2. The enzyme catalyses CDP-2,3-bis-O-(geranylgeranyl)-sn-glycerol + 8 AH2 = CDP-2,3-bis-O-(phytanyl)-sn-glycerol + 8 A. It carries out the reaction archaetidylserine + 8 AH2 = 2,3-bis-O-phytanyl-sn-glycero-3-phospho-L-serine + 8 A. The protein operates within membrane lipid metabolism; glycerophospholipid metabolism. In terms of biological role, is involved in the reduction of 2,3-digeranylgeranylglycerophospholipids (unsaturated archaeols) into 2,3-diphytanylglycerophospholipids (saturated archaeols) in the biosynthesis of archaeal membrane lipids. Catalyzes the formation of archaetidic acid (2,3-di-O-phytanyl-sn-glyceryl phosphate) from 2,3-di-O-geranylgeranylglyceryl phosphate (DGGGP) via the hydrogenation of each double bond of the isoprenoid chains. Is also probably able to reduce double bonds of geranyl groups in CDP-2,3-bis-O-(geranylgeranyl)-sn-glycerol and archaetidylserine, thus acting at various stages in the biosynthesis of archaeal membrane lipids. The polypeptide is Digeranylgeranylglycerophospholipid reductase (Methanosphaerula palustris (strain ATCC BAA-1556 / DSM 19958 / E1-9c)).